The following is a 145-amino-acid chain: Transcription antitermination protein NusB (145 aa).

It belongs to the NusB family.

Involved in transcription antitermination. Required for transcription of ribosomal RNA (rRNA) genes. Binds specifically to the boxA antiterminator sequence of the ribosomal RNA (rrn) operons. The protein is Transcription antitermination protein NusB of Acidothermus cellulolyticus (strain ATCC 43068 / DSM 8971 / 11B).